A 280-amino-acid chain; its full sequence is Protease HtpX (280 aa).

The next 2 helical transmembrane spans lie at 7 to 26 (TFIL…GLLG) and 30 to 49 (GMLV…YWYS). His-129 lines the Zn(2+) pocket. The active site involves Glu-130. Position 133 (His-133) interacts with Zn(2+). The next 2 helical transmembrane spans lie at 146-166 (ATIA…SMFG) and 178-198 (VVGM…QMAI). Position 203 (Glu-203) interacts with Zn(2+).

Belongs to the peptidase M48B family. It depends on Zn(2+) as a cofactor.

The protein resides in the cell inner membrane. This is Protease HtpX from Legionella pneumophila (strain Lens).